We begin with the raw amino-acid sequence, 87 residues long: Large ribosomal subunit protein eL33 (87 aa).

It belongs to the eukaryotic ribosomal protein eL33 family.

The polypeptide is Large ribosomal subunit protein eL33 (Pyrococcus abyssi (strain GE5 / Orsay)).